An 851-amino-acid chain; its full sequence is DNA mismatch repair protein MutS (851 aa).

An ATP-binding site is contributed by 614-621; sequence GPNMGGKS.

This sequence belongs to the DNA mismatch repair MutS family.

In terms of biological role, this protein is involved in the repair of mismatches in DNA. It is possible that it carries out the mismatch recognition step. This protein has a weak ATPase activity. The polypeptide is DNA mismatch repair protein MutS (Yersinia pestis).